The chain runs to 917 residues: PAX3- and PAX7-binding protein 1 (917 aa).

Over residues 1–11 (MFRKARRVNVR) the composition is skewed to basic residues. Disordered stretches follow at residues 1–123 (MFRK…FKVK), 143–205 (LEKS…GAFS), and 229–275 (RKKR…RIVF). S16 is modified (phosphoserine). Positions 16-28 (SEEEERERDEEQE) are enriched in acidic residues. 2 stretches are compositionally biased toward gly residues: residues 40-50 (EEAGPGGGDRA) and 73-85 (AEAGGGFPGGAEP). A Glycyl lysine isopeptide (Lys-Gly) (interchain with G-Cter in SUMO1); alternate cross-link involves residue K149. K149 is covalently cross-linked (Glycyl lysine isopeptide (Lys-Gly) (interchain with G-Cter in SUMO2); alternate). Phosphoserine occurs at positions 154, 155, and 158. Residues 161–172 (PLDKTGHVKDTN) are compositionally biased toward basic and acidic residues. Over residues 183–193 (GEDEMDMESEK) the composition is skewed to acidic residues. S191 bears the Phosphoserine mark. The span at 234 to 256 (MARELGDFTPHDNEPGKGRLVRE) shows a compositional bias: basic and acidic residues. Residues 257 to 268 (DENDASDDEDDD) are compositionally biased toward acidic residues. S262 and S295 each carry phosphoserine. Disordered stretches follow at residues 362 to 381 (SSDAKSQKTDNTVPFKTPSN) and 530 to 564 (AEREARRTRRRQAREQTGKMADHLEGLSSDDEETS). The tract at residues 378 to 558 (TPSNEMTPVT…MADHLEGLSS (181 aa)) is necessary and sufficient for interaction with PAX7. Positions 542 to 554 (AREQTGKMADHLE) are enriched in basic and acidic residues. A phosphoserine mark is found at S557 and S558. T563 carries the post-translational modification Phosphothreonine.

It belongs to the GCF family. Interacts with PAX3 and PAX7. Interacts with WDR5; associates with a histone methyltransferase (HMT) complex composed at least of RBBP5, ASH2L, SET1, SET2 and KMT2A/MLL1, KMT2D/MLL2, KMT2C/MLL3 and KMT2B/MLL4 through direct interaction with WDR5. As to expression, ubiquitous.

The protein localises to the nucleus. Functionally, adapter protein linking the transcription factors PAX3 and PAX7 to the histone methylation machinery and involved in myogenesis. Associates with a histone methyltransferase complex that specifically mediates dimethylation and trimethylation of 'Lys-4' of histone H3. Mediates the recruitment of that complex to the transcription factors PAX3 and PAX7 on chromatin to regulate the expression of genes involved in muscle progenitor cells proliferation including ID3 and CDC20. This Homo sapiens (Human) protein is PAX3- and PAX7-binding protein 1 (PAXBP1).